The following is a 300-amino-acid chain: NAD kinase (300 aa).

The active-site Proton acceptor is the Asp75. NAD(+)-binding positions include 75–76, 149–150, Arg177, Asp179, 190–195, Ala214, and Gln248; these read DG, ND, and TAYALS.

This sequence belongs to the NAD kinase family. It depends on a divalent metal cation as a cofactor.

The protein resides in the cytoplasm. It catalyses the reaction NAD(+) + ATP = ADP + NADP(+) + H(+). Involved in the regulation of the intracellular balance of NAD and NADP, and is a key enzyme in the biosynthesis of NADP. Catalyzes specifically the phosphorylation on 2'-hydroxyl of the adenosine moiety of NAD to yield NADP. The protein is NAD kinase of Burkholderia ambifaria (strain MC40-6).